Consider the following 403-residue polypeptide: Photosystem II stability/assembly factor HCF136, chloroplastic (403 aa).

A chloroplast-targeting transit peptide spans 1–53; that stretch reads MASLQLCDGYLLFKPSVSPRFLSQRISHRLIPKASSSPPPSPSPSSSSSSLSF. The segment at 31 to 50 is disordered; the sequence is IPKASSSPPPSPSPSSSSSS. A thylakoid-targeting transit peptide spans 54–78; that stretch reads SRRELLYQSAAVSLSLSSIVGPARA.

This sequence belongs to the Ycf48 family. As to quaternary structure, interacts with PAM68. In terms of tissue distribution, expression in green tissue, not roots.

It is found in the plastid. The protein resides in the chloroplast thylakoid lumen. In terms of biological role, essential for photosystem II (PSII) biogenesis; required for assembly of an early intermediate in PSII assembly that includes D2 (psbD) and cytochrome b559. Has been suggested to be required for chlorophyll a binding. This chain is Photosystem II stability/assembly factor HCF136, chloroplastic (HCF136), found in Arabidopsis thaliana (Mouse-ear cress).